The sequence spans 69 residues: DNA-directed RNA polymerase subunit epsilon (69 aa).

It belongs to the RNA polymerase subunit epsilon family. RNAP is composed of a core of 2 alpha, a beta and a beta' subunit. The core is associated with a delta subunit, and at least one of epsilon or omega. When a sigma factor is associated with the core the holoenzyme is formed, which can initiate transcription.

The enzyme catalyses RNA(n) + a ribonucleoside 5'-triphosphate = RNA(n+1) + diphosphate. Its function is as follows. A non-essential component of RNA polymerase (RNAP). This Halalkalibacterium halodurans (strain ATCC BAA-125 / DSM 18197 / FERM 7344 / JCM 9153 / C-125) (Bacillus halodurans) protein is DNA-directed RNA polymerase subunit epsilon.